Consider the following 194-residue polypeptide: MASRTVLLPSAVLILRLLSLGLLAASLALIAADKLNVDSDPPQRYTFRDVYAYRYVLAVAVIGCAYTLLQLPLAAVSIIASGNNKRGIGAGGGSVAVALLVLVLLADVVFALLLATGAAAGFAFTYDVKRYLDGQFDDDSIGTPEVDKLHRDMDKFFDLAYAAAGLMLAAAACMALVIMLSVYSLARQVRSDYI.

Topologically, residues 1–10 are cytoplasmic; the sequence is MASRTVLLPS. A helical membrane pass occupies residues 11–31; sequence AVLILRLLSLGLLAASLALIA. Topologically, residues 32–55 are extracellular; it reads ADKLNVDSDPPQRYTFRDVYAYRY. The helical transmembrane segment at 56 to 76 threads the bilayer; it reads VLAVAVIGCAYTLLQLPLAAV. The Cytoplasmic portion of the chain corresponds to 77–94; that stretch reads SIIASGNNKRGIGAGGGS. The helical transmembrane segment at 95–115 threads the bilayer; that stretch reads VAVALLVLVLLADVVFALLLA. The Extracellular portion of the chain corresponds to 116–161; the sequence is TGAAAGFAFTYDVKRYLDGQFDDDSIGTPEVDKLHRDMDKFFDLAY. A helical transmembrane segment spans residues 162–182; sequence AAAGLMLAAAACMALVIMLSV. Topologically, residues 183–194 are cytoplasmic; sequence YSLARQVRSDYI.

The protein belongs to the Casparian strip membrane proteins (CASP) family. In terms of assembly, homodimer and heterodimers.

The protein localises to the cell membrane. In Sorghum bicolor (Sorghum), this protein is CASP-like protein 4D1.